The following is a 307-amino-acid chain: tRNA N(3)-methylcytidine methyltransferase trm140 (307 aa).

Residues tryptophan 83, tyrosine 87, glycine 125, aspartate 150, aspartate 176, leucine 177, and isoleucine 197 each contribute to the S-adenosyl-L-methionine site.

The protein belongs to the methyltransferase superfamily. METL family.

The enzyme catalyses cytidine(32) in tRNA(Thr) + S-adenosyl-L-methionine = N(3)-methylcytidine(32) in tRNA(Thr) + S-adenosyl-L-homocysteine + H(+). Functionally, S-adenosyl-L-methionine-dependent methyltransferase that mediates N(3)-methylcytidine modification of residue 32 of the tRNA anticodon loop of tRNA(Thr). Does not catalyze N(3)-methylcytidine modification of tRNA(Ser). In Schizosaccharomyces pombe (strain 972 / ATCC 24843) (Fission yeast), this protein is tRNA N(3)-methylcytidine methyltransferase trm140.